We begin with the raw amino-acid sequence, 392 residues long: THO complex subunit MFT1 (392 aa).

Acidic residues-rich tracts occupy residues 258 to 271 (DNIDEDYESDEDEE) and 290 to 330 (NVDE…EVDG). The segment at 258-392 (DNIDEDYESD…SASSSVEEVK (135 aa)) is disordered. Residue Ser266 is modified to Phosphoserine. A compositionally biased stretch (polar residues) spans 331–344 (ESSQQEDNSRQGNN). Positions 345 to 367 (EETDKETGVIEEPDAVNDAEEAD) are enriched in acidic residues. Over residues 377-392 (GTTSDFSASSSVEEVK) the composition is skewed to polar residues.

In terms of assembly, component of the THO complex, which is composed of HPR1, MFT1, THO2 and THP2. Together with SUB2, TEX1 and YRA1, THO forms the transcription/export (TREX) complex. THO associates with DNA and RNA in vitro.

The protein localises to the nucleus. In terms of biological role, component the THO subcomplex of the TREX complex, which operates in coupling transcription elongation to mRNA export. The THO complex is recruited to transcribed genes and moves along the gene with the elongating polymerase during transcription. THO is important for stabilizing nascent RNA in the RNA polymerase II elongation complex by preventing formation of DNA:RNA hybrids behind the elongating polymerase. It functions in cotranscriptional formation of an export-competent messenger ribonucleoprotein particle (mRNP) by facilitating the loading of ATP-dependent RNA helicase SUB2 and the mRNA export factor YRA1 along the nascent mRNA. In Saccharomyces cerevisiae (strain ATCC 204508 / S288c) (Baker's yeast), this protein is THO complex subunit MFT1 (MFT1).